A 303-amino-acid polypeptide reads, in one-letter code: UDP-3-O-acyl-N-acetylglucosamine deacetylase (303 aa).

Zn(2+)-binding residues include His78, His237, and Asp241. His264 (proton donor) is an active-site residue.

Belongs to the LpxC family. It depends on Zn(2+) as a cofactor.

It catalyses the reaction a UDP-3-O-[(3R)-3-hydroxyacyl]-N-acetyl-alpha-D-glucosamine + H2O = a UDP-3-O-[(3R)-3-hydroxyacyl]-alpha-D-glucosamine + acetate. It participates in glycolipid biosynthesis; lipid IV(A) biosynthesis; lipid IV(A) from (3R)-3-hydroxytetradecanoyl-[acyl-carrier-protein] and UDP-N-acetyl-alpha-D-glucosamine: step 2/6. Catalyzes the hydrolysis of UDP-3-O-myristoyl-N-acetylglucosamine to form UDP-3-O-myristoylglucosamine and acetate, the committed step in lipid A biosynthesis. In Xanthomonas oryzae pv. oryzae (strain MAFF 311018), this protein is UDP-3-O-acyl-N-acetylglucosamine deacetylase.